The sequence spans 303 residues: Plasmodesmata-located protein 1 (303 aa).

A signal peptide spans 1 to 21; that stretch reads MKLTYQFFIFWFFLPFFAISG. Topologically, residues 22-268 are extracellular; it reads DDDYKNLIFK…GEKRQHTERT (247 aa). Gnk2-homologous domains follow at residues 27–136 and 141–248; these read NLIF…SSGF and GTEM…YYSH. Disulfide bonds link Cys-33/Cys-108, Cys-84/Cys-93, Cys-96/Cys-127, Cys-149/Cys-226, Cys-202/Cys-211, and Cys-214/Cys-239. Residues 269-289 traverse the membrane as a helical segment; the sequence is IALAVGGVFVLGFVIVCLLVL. Residues 269–289 form a necessary and sufficient for plasmodesmal targeting region; that stretch reads IALAVGGVFVLGFVIVCLLVL. The Cytoplasmic portion of the chain corresponds to 290 to 303; it reads RSAMKKKSNKYDAY.

This sequence belongs to the cysteine-rich repeat secretory protein family. Plasmodesmata-located proteins (PDLD) subfamily. Interacts with AZI1. Interacts with PDLP5. Does not interact with DIR1. As to quaternary structure, (Microbial infection) Interacts with Grapevine fanleaf virus (GFLV) 2B-MP. Interacts with Cauliflower mosaic virus (CaMV) movement protein. As to expression, highly expressed in cell suspension. Expressed in epidermal and spongy mesophyll cells, and the cell wall interface at the base of the leaf trichome (at protein level). Expressed in haustoria-containing cells.

It is found in the cell membrane. The protein resides in the cell junction. It localises to the plasmodesma. Functionally, modulates cell-to-cell trafficking. Required for systemic acquired resistance (SAR) which is mediated by the signaling molecules azelaic acid (AzA), glycerol-3-phosphate (G3P), and salicylic acid (SA). Required for the proper localization and stability of AZI1 which is involved in SAR. Mediates callose deposition during downy mildew fungal infection around haustoria. Haustoria are unicellular protrusions from hyphae and function as the site of molecular exchange of nutrients and effectors between host and pathogen. This Arabidopsis thaliana (Mouse-ear cress) protein is Plasmodesmata-located protein 1.